Reading from the N-terminus, the 369-residue chain is Flagellar P-ring protein (369 aa).

An N-terminal signal peptide occupies residues 1 to 22; that stretch reads MFNARRLIAATLLMSCAFGAHA.

This sequence belongs to the FlgI family. As to quaternary structure, the basal body constitutes a major portion of the flagellar organelle and consists of four rings (L,P,S, and M) mounted on a central rod.

It localises to the periplasm. The protein resides in the bacterial flagellum basal body. Its function is as follows. Assembles around the rod to form the L-ring and probably protects the motor/basal body from shearing forces during rotation. In Pseudomonas entomophila (strain L48), this protein is Flagellar P-ring protein.